The sequence spans 326 residues: Malate dehydrogenase (326 aa).

12–18 (GGTGQIA) is an NAD(+) binding site. Arg93 and Arg99 together coordinate substrate. NAD(+) is bound by residues Asn106, Gln113, and 130–132 (VGN). Residues Asn132 and Arg163 each contribute to the substrate site. His188 serves as the catalytic Proton acceptor.

Belongs to the LDH/MDH superfamily. MDH type 2 family.

The enzyme catalyses (S)-malate + NAD(+) = oxaloacetate + NADH + H(+). In terms of biological role, catalyzes the reversible oxidation of malate to oxaloacetate. The protein is Malate dehydrogenase of Chlamydia trachomatis serovar L2 (strain ATCC VR-902B / DSM 19102 / 434/Bu).